The sequence spans 86 residues: Apolipoprotein C-I (86 aa).

An N-terminal signal peptide occupies residues 1 to 26 (MRLFLSLPVLVVALLMILEGPGPAQG).

The protein belongs to the apolipoprotein C1 family.

Its subcellular location is the secreted. Functionally, inhibitor of lipoprotein binding to the low density lipoprotein (LDL) receptor, LDL receptor-related protein, and very low density lipoprotein (VLDL) receptor. Associates with high density lipoproteins (HDL) and the triacylglycerol-rich lipoproteins in the plasma and makes up about 10% of the protein of the VLDL and 2% of that of HDL. Appears to interfere directly with fatty acid uptake and is also the major plasma inhibitor of cholesteryl ester transfer protein (CETP). Binds free fatty acids and reduces their intracellular esterification. Modulates the interaction of APOE with beta-migrating VLDL and inhibits binding of beta-VLDL to the LDL receptor-related protein. The protein is Apolipoprotein C-I (APOC1) of Aotus nancymaae (Ma's night monkey).